The sequence spans 511 residues: 2,3-bisphosphoglycerate-independent phosphoglycerate mutase (511 aa).

Asp12 and Ser62 together coordinate Mn(2+). Ser62 serves as the catalytic Phosphoserine intermediate. Substrate contacts are provided by residues His123, 153-154, Arg185, Arg191, 260-263, and Lys335; these read RD and RPDR. Residues Asp402, His406, Asp443, His444, and His462 each coordinate Mn(2+).

This sequence belongs to the BPG-independent phosphoglycerate mutase family. As to quaternary structure, monomer. Mn(2+) serves as cofactor.

The enzyme catalyses (2R)-2-phosphoglycerate = (2R)-3-phosphoglycerate. It participates in carbohydrate degradation; glycolysis; pyruvate from D-glyceraldehyde 3-phosphate: step 3/5. In terms of biological role, catalyzes the interconversion of 2-phosphoglycerate and 3-phosphoglycerate. The chain is 2,3-bisphosphoglycerate-independent phosphoglycerate mutase from Acetivibrio thermocellus (strain ATCC 27405 / DSM 1237 / JCM 9322 / NBRC 103400 / NCIMB 10682 / NRRL B-4536 / VPI 7372) (Clostridium thermocellum).